Here is a 163-residue protein sequence, read N- to C-terminus: Phosphopantetheine adenylyltransferase (163 aa).

Residue Thr10 coordinates substrate. ATP-binding positions include 10–11 (TF) and His18. The substrate site is built by Lys42, Leu74, and Arg88. ATP is bound by residues 89-91 (GLR), Glu99, and 124-130 (NSFISST).

This sequence belongs to the bacterial CoaD family. Homohexamer. Requires Mg(2+) as cofactor.

Its subcellular location is the cytoplasm. The enzyme catalyses (R)-4'-phosphopantetheine + ATP + H(+) = 3'-dephospho-CoA + diphosphate. It functions in the pathway cofactor biosynthesis; coenzyme A biosynthesis; CoA from (R)-pantothenate: step 4/5. Functionally, reversibly transfers an adenylyl group from ATP to 4'-phosphopantetheine, yielding dephospho-CoA (dPCoA) and pyrophosphate. This is Phosphopantetheine adenylyltransferase from Shewanella oneidensis (strain ATCC 700550 / JCM 31522 / CIP 106686 / LMG 19005 / NCIMB 14063 / MR-1).